Here is a 589-residue protein sequence, read N- to C-terminus: ATP-dependent lipid A-core flippase (589 aa).

The next 5 membrane-spanning stretches (helical) occupy residues 29–49 (LLLVAALIAALIEAAGTTGFL), 70–90 (WLPVQIILLFVVRGVAGYITD), 157–177 (VIGALALMLWHSWQVTLTILV), 261–281 (MIGAIGLSALLFVAGAQALAG), and 283–303 (LTAGDFVVLMTSMLTIIPGLK). Positions 32–314 (VAALIAALIE…LTNVQNMVQR (283 aa)) constitute an ABC transmembrane type-1 domain. The region spanning 346–582 (IEFRDVTARY…GGLYSHLHGM (237 aa)) is the ABC transporter domain. 380-387 (GRSGSGKS) is a binding site for ATP.

It belongs to the ABC transporter superfamily. Lipid exporter (TC 3.A.1.106) family. Homodimer.

The protein localises to the cell inner membrane. The catalysed reaction is ATP + H2O + lipid A-core oligosaccharideSide 1 = ADP + phosphate + lipid A-core oligosaccharideSide 2.. In terms of biological role, involved in lipopolysaccharide (LPS) biosynthesis. Translocates lipid A-core from the inner to the outer leaflet of the inner membrane. Transmembrane domains (TMD) form a pore in the inner membrane and the ATP-binding domain (NBD) is responsible for energy generation. This is ATP-dependent lipid A-core flippase from Xanthomonas axonopodis pv. citri (strain 306).